Consider the following 330-residue polypeptide: MPPNSVDKTNETEYLKDNHVDYEKLIAPQASPIKHKIVVMNVIRFSYLHIAGLYGLYLCFTSAKLATSVFAIVLFFLGNFGITAGAHRLWSHNGYKVKLPLEILLMVFNSIAFQNTIFTWVRDHRLHHKYTDTDADPHNATRGFFFSHIGWLLVRKHPMVKIAGKSLDMSDIYCNPLLRFQKKYAIPFIGTICFIIPTLAPMYFWGESLNNAWHITVLRYIFSLNGTFLVNSAAHLWGYKPYDKSLKATQSGMANAFTFGEGFHNYHHVFPWDYRADELGDRYINLTTRFIDFFAWMGWAYDLKTASTNIIEKRALRTGDGTYKRPNGMN.

2 consecutive transmembrane segments (helical) span residues 37 to 57 (IVVM…YGLY) and 65 to 85 (LATS…ITAG). The Histidine box-1 motif lies at 87–92 (HRLWSH). A helical transmembrane segment spans residues 101–121 (LEILLMVFNSIAFQNTIFTWV). The short motif at 124–128 (HRLHH) is the Histidine box-2 element. The next 2 membrane-spanning stretches (helical) occupy residues 185 to 205 (AIPF…MYFW) and 216 to 238 (TVLR…HLWG). Residues 264–268 (HNYHH) carry the Histidine box-3 motif.

It belongs to the fatty acid desaturase type 1 family. Fe(2+) is required as a cofactor. As to expression, highly expressed in the pheromone gland.

It localises to the membrane. It catalyses the reaction an 11,12-saturated fatty acyl-CoA + 2 Fe(II)-[cytochrome b5] + O2 + 2 H(+) = an (11Z)-Delta(11)-fatty acyl-CoA + 2 Fe(III)-[cytochrome b5] + 2 H2O. It carries out the reaction (11Z)-hexadecenoyl-CoA + AH2 + O2 = (10E,12Z)-hexadecadienoyl-CoA + A + 2 H2O. Its function is as follows. Fatty acid desaturase that catalyzes 2 consecutive steps in the biosynthesis of bombykol, a sex pheromone produced by the moth. First acts as an acyl-CoA Delta(11) desaturase (1) by catalyzing the formation of Delta(11) fatty acyl precursors. Then acts as a (11Z)-hexadec-11-enoyl-CoA conjugase (2) by converting a single cis double bond at position 11 of (11Z)-hexadec-11-enoyl-CoA into conjugated 10 trans and 12 cis double bonds. This chain is (11Z)-hexadec-11-enoyl-CoA conjugase, found in Bombyx mori (Silk moth).